We begin with the raw amino-acid sequence, 355 residues long: Chemerin-like receptor 2 (355 aa).

At 1-41 (MEDLEETLFEEFENYSYALDYYSLESDLEEKVQLGVVHWVS) the chain is on the extracellular side. N-linked (GlcNAc...) asparagine glycosylation occurs at Asn-14. A helical membrane pass occupies residues 42-62 (LVLYCLSFVLGIPGNAIVIWF). The Cytoplasmic segment spans residues 63–73 (TGFKWKKTVST). Residues 74–94 (LWFLNLAIADFIFLLFLPLYI) traverse the membrane as a helical segment. Residues 95-112 (SYVVMNFHWPFGIWLCKA) lie on the Extracellular side of the membrane. Cys-110 and Cys-187 are joined by a disulfide. A helical transmembrane segment spans residues 113 to 133 (NSFTAQLNMFASVFFLTVISL). Residues 134-154 (DHYIHLIHPVLSHRHRTLKNS) lie on the Cytoplasmic side of the membrane. Residues 155-175 (LIVIIFIWLLASLIGGPALYF) form a helical membrane-spanning segment. Topologically, residues 176-210 (RDTVEFNNHTLCYNNFQKHDPDLTVIRHHVLTWVK) are extracellular. Residues 211–231 (FIVGYLFPLLTMSICYLCLIF) traverse the membrane as a helical segment. At 232-247 (KVKKRSILISSRHFWT) the chain is on the cytoplasmic side. A helical transmembrane segment spans residues 248–268 (ILAVVVAFVVCWTPYHLFSIW). Residues 269-286 (ELTIHHNSYSHHVMQAGI) lie on the Extracellular side of the membrane. The chain crosses the membrane as a helical span at residues 287-307 (PLSTGLAFLNSCLNPILYVLI). The Cytoplasmic portion of the chain corresponds to 308-355 (SKKFQARFRSSVAEILKYTLWEVSCSGTVSEQLRNSETKNLCLLETAQ).

It belongs to the chemokine-like receptor (CMKLR) family.

The protein localises to the cell membrane. In terms of biological role, receptor for chemoattractant adipokine chemerin/RARRES2 suggesting a role for this receptor in the regulation of inflammation and energy homesotasis. Signals mainly via beta-arrestin pathway. Binding of RARRES2 activates weakly G proteins, calcium mobilization and MAPK1/MAPK3 (ERK1/2) phosphorylation too. Acts also as a receptor for TAFA1, mediates its effects on neuronal stem-cell proliferation and differentiation via the activation of ROCK/ERK and ROCK/STAT3 signaling pathway. The sequence is that of Chemerin-like receptor 2 (CMKLR2) from Macaca mulatta (Rhesus macaque).